Reading from the N-terminus, the 127-residue chain is MARIAGVDIPRNKKIEIAITYIYGIGRSNGMEILRKANVNPERRVRDLTEEEVGRIREIVDREYRVEGDLRREVQLNIKRLMDIGCYRGLRHRRGMPVRGQRTRTNARTRRGRRGQAIGIKKKATKK.

Positions 93–127 (RRGMPVRGQRTRTNARTRRGRRGQAIGIKKKATKK) are disordered.

It belongs to the universal ribosomal protein uS13 family. In terms of assembly, part of the 30S ribosomal subunit. Forms a loose heterodimer with protein S19. Forms two bridges to the 50S subunit in the 70S ribosome.

Functionally, located at the top of the head of the 30S subunit, it contacts several helices of the 16S rRNA. In the 70S ribosome it contacts the 23S rRNA (bridge B1a) and protein L5 of the 50S subunit (bridge B1b), connecting the 2 subunits; these bridges are implicated in subunit movement. Contacts the tRNAs in the A and P-sites. This is Small ribosomal subunit protein uS13 from Chloroflexus aurantiacus (strain ATCC 29366 / DSM 635 / J-10-fl).